An 823-amino-acid polypeptide reads, in one-letter code: Zygotic DNA replication licensing factor mcm6-A (823 aa).

The segment at 159–186 (CLDCQTLVRDVEQQFKYTQPSICRNPVC) adopts a C4-type zinc-finger fold. Residues 347–554 (LYHNLCTSLF…TDYAIARRIV (208 aa)) form the MCM domain. 397–404 (GDPSTAKS) is a binding site for ATP. Residues 529 to 532 (SRFD) carry the Arginine finger motif. The disordered stretch occupies residues 663–710 (PDVNLDQDDEHEPEDETQEGTNGDAEVPNGVNGHVNGINGHSQESNAA). A compositionally biased stretch (acidic residues) spans 667-680 (LDQDDEHEPEDETQ). Over residues 691 to 703 (NGVNGHVNGINGH) the composition is skewed to low complexity.

This sequence belongs to the MCM family. In terms of assembly, component of the mcm2-7 complex (RLF-M). The complex forms a toroidal hexameric ring with the proposed subunit order mcm2-mcm6-mcm4-mcm7-mcm3-mcm5 (By simililarity). Begins to associate with zmcm3, mcm4 and mcm7 into mcm complexes at the neurula stage. May replace mmcm6 in the complex that functions during licensing of DNA replication.

The protein localises to the nucleus. It carries out the reaction ATP + H2O = ADP + phosphate + H(+). Acts as a component of the mcm2-7 complex (mcm complex) which is the putative replicative helicase essential for 'once per cell cycle' DNA replication initiation and elongation in eukaryotic cells. The active ATPase sites in the mcm2-7 ring are formed through the interaction surfaces of two neighboring subunits such that a critical structure of a conserved arginine finger motif is provided in trans relative to the ATP-binding site of the Walker A box of the adjacent subunit. The six ATPase active sites, however, are likely to contribute differentially to the complex helicase activity. The existence of maternal and zygotic forms of mcm3 and mcm6 suggests that specific forms of mcm2-7 complexes may be used during different stages of development. May replace mmcm6 in the mcm2-7 complex. In Xenopus laevis (African clawed frog), this protein is Zygotic DNA replication licensing factor mcm6-A (zmcm6-a).